The chain runs to 207 residues: Partner of Y14 and mago (207 aa).

Disordered regions lie at residues 1–28 (MSTYLQSSEGKFIPATKRPDGTWRKARR) and 52–133 (QRQA…NSIS). Residues 64-91 (LLAAESKKEREKQERTRAKKQEKESGRQ) adopt a coiled-coil conformation. The segment covering 68-90 (ESKKEREKQERTRAKKQEKESGR) has biased composition (basic and acidic residues). Residues 123 to 133 (PSGSRDINSIS) show a composition bias toward polar residues. Residues 152 to 184 (AKQLKKLRKKIREIEQIESRIQAGEQKKLDKDQ) adopt a coiled-coil conformation.

Belongs to the pym family. As to quaternary structure, interacts (via N-terminus) with mago and tsu/RBM8A; the interaction is direct. In terms of tissue distribution, expression detected in the ovary. In the oocyte expressed in the germarium, nurse cell and follicle cell.

The protein localises to the cytoplasm. Its subcellular location is the nucleus. Regulator of the exon junction complex (EJC), a multiprotein complex that associates immediately upstream of the exon-exon junction on mRNAs and serves as a positional landmark for the intron exon structure of genes and directs post-transcriptional processes in the cytoplasm such as mRNA export, nonsense-mediated mRNA decay (NMD) or translation. Acts as an EJC disassembly factor by disrupting mature EJC from spliced mRNAs. Required for normal localization of osk mRNA to the posterior pole of the developing oocyte. Does not interact with the small ribosomal unit or components of the translation initiation complex. May not function in cap-dependent translation regulation. In Drosophila melanogaster (Fruit fly), this protein is Partner of Y14 and mago.